Here is a 189-residue protein sequence, read N- to C-terminus: Cytidylate kinase (189 aa).

7-15 provides a ligand contact to ATP; the sequence is GPPGSGKTS.

It belongs to the cytidylate kinase family. Type 2 subfamily.

It localises to the cytoplasm. It carries out the reaction CMP + ATP = CDP + ADP. The catalysed reaction is dCMP + ATP = dCDP + ADP. This chain is Cytidylate kinase, found in Saccharolobus islandicus (strain L.S.2.15 / Lassen #1) (Sulfolobus islandicus).